Here is a 502-residue protein sequence, read N- to C-terminus: Hexokinase-9 (502 aa).

Residues 5–24 form a helical membrane-spanning segment; the sequence is AALASAAMAAAAVAVVSTVL. The 452-residue stretch at 37–488 folds into the Hexokinase domain; the sequence is RAEAVLLRDL…SGVGAALLAA (452 aa). A hexokinase small subdomain region spans residues 92–230; sequence SGGEKGMFYA…GLDMKVTALV (139 aa). ADP-binding residues include Gly-106, Thr-107, and Asn-108. Residues Thr-196, Lys-197, Asn-231, and Asp-232 each contribute to the D-glucose site. The interval 231–477 is hexokinase large subdomain; that stretch reads NDTVGTLAAG…PSVMIKHVND (247 aa). Residue Thr-255 participates in ADP binding. Asn-258, Glu-286, and Glu-317 together coordinate D-glucose. An ADP-binding site is contributed by Gly-442.

It belongs to the hexokinase family. As to expression, expressed in roots, leaves, flowers, immature seeds, endosperm and seed coat.

The protein localises to the plastid. The protein resides in the chloroplast outer membrane. It catalyses the reaction a D-hexose + ATP = a D-hexose 6-phosphate + ADP + H(+). It carries out the reaction D-fructose + ATP = D-fructose 6-phosphate + ADP + H(+). The catalysed reaction is D-glucose + ATP = D-glucose 6-phosphate + ADP + H(+). It functions in the pathway carbohydrate metabolism; hexose metabolism. It participates in carbohydrate degradation; glycolysis; D-glyceraldehyde 3-phosphate and glycerone phosphate from D-glucose: step 1/4. Its function is as follows. Fructose and glucose phosphorylating enzyme. The polypeptide is Hexokinase-9 (HXK9) (Oryza sativa subsp. japonica (Rice)).